The chain runs to 102 residues: MLTVCWFLYLVRTADNALYTGITTDVGRRFLEHQTGKGAKALRGKGELSLAFSAPVGERSLALKMEYRIKQLTKRQKERLVAGDGSFEALYESLQTPPVKRD.

The 76-residue stretch at 4 to 79 folds into the GIY-YIG domain; it reads VCWFLYLVRT…KQLTKRQKER (76 aa).

The protein belongs to the UPF0213 family.

The chain is UPF0213 protein Ent638_3592 from Enterobacter sp. (strain 638).